Reading from the N-terminus, the 412-residue chain is Heat stress transcription factor A-3 (412 aa).

A DNA-binding region spans residues 53 to 147 (IPPFLSKTFD…LLKNIHRRRS (95 aa)). The tract at residues 144–170 (RRRSPQSNQTCCSSTSQSQGSPTEVGG) is disordered. Residues 148–166 (PQSNQTCCSSTSQSQGSPT) are compositionally biased toward low complexity. The hydrophobic repeat HR-A/B stretch occupies residues 159-225 (SQSQGSPTEV…QLLSFLAKLF (67 aa)). Residues 166-224 (TEVGGEIEKLRKERRALMEEMVELQQQSRGTARHVDTVNQRLKAAEQRQKQLLSFLAKL) are a coiled coil. A Bipartite nuclear localization signal motif is present at residues 238–254 (KGKEKGGALGLEKARKK). The AHA1 signature appears at 277–286 (DDWERLLMYD). Positions 381–390 (DVCWEQFAAG) match the AHA2 motif.

This sequence belongs to the HSF family. Class A subfamily. Homotrimer. Post-translationally, exhibits temperature-dependent phosphorylation.

It is found in the nucleus. Transcriptional activator that specifically binds DNA sequence 5'-AGAAnnTTCT-3' known as heat shock promoter elements (HSE). Involved in heat stress response. Activated by DREB2A under heat stress. This Arabidopsis thaliana (Mouse-ear cress) protein is Heat stress transcription factor A-3 (HSFA3).